We begin with the raw amino-acid sequence, 246 residues long: Large ribosomal subunit protein uL30 (246 aa).

The protein belongs to the universal ribosomal protein uL30 family.

Binds to G-rich structures in 28S rRNA and in mRNAs. Plays a regulatory role in the translation apparatus; inhibits cell-free translation of mRNAs. In Dictyostelium discoideum (Social amoeba), this protein is Large ribosomal subunit protein uL30 (rpl7).